Consider the following 260-residue polypeptide: Uroplakin-1b (260 aa).

At 1-12 (MAKDDSSVRCFQ) the chain is on the cytoplasmic side. Residues 13–38 (GLLIFGNVIVGMCGIALTAECIFFVS) traverse the membrane as a helical segment. Residues 39–60 (DQHSLYPLLEATDNDDIYGAAW) lie on the Extracellular side of the membrane. A helical membrane pass occupies residues 61-81 (IGMFVGICLFCLSVLGIVGIM). Topologically, residues 82 to 86 (KSNRK) are cytoplasmic. A helical transmembrane segment spans residues 87-107 (ILLAYFILMFIVYGFEVASCI). Topologically, residues 108-229 (TAATQRDFFT…ELISGPMNRH (122 aa)) are extracellular. Residues 230–250 (AWGVAWFGFAILCWTFWVLLG) traverse the membrane as a helical segment. Over 251-260 (TMFYWSRIEY) the chain is Cytoplasmic.

It belongs to the tetraspanin (TM4SF) family. As to quaternary structure, heterodimer with uroplakin-3A (UPK3A) or uroplakin-3B (UPK3B).

It is found in the membrane. Functionally, component of the asymmetric unit membrane (AUM); a highly specialized biomembrane elaborated by terminally differentiated urothelial cells. This chain is Uroplakin-1b (UPK1B), found in Neovison vison (American mink).